The sequence spans 433 residues: QFSPNLSFSAFFPIITFTTATMGFQKIKVANPIVEMDGDEMTRIIWKYIKDKLIFPFVELDIKYFDLGLPYRDETNDKVTVESAEATLKYNVAIKCATITPDEARVKEFGLKSMWRSPNGTIRNILNGTVFREPIICKNIPRLIPGWTKPICIGRHAFGDQYRATDSVIKGPGKLKLVFVPEGQGETTDLEVYNFTGEGGVALAMYNTDESIRSFAEASMAVALEKKWPLYLSTKNTILKKYDGRFKDIFQEVYEAGWKSKYEAAGIWYEHRLIDDMVAYALKSEGGYVWACKNYDGDVQSDFLAQGFGSLGLMTSVLVCPDGKTIEAEAAHGTVTRHFRVHQKGGETSTNSIASIFAWTRGLAHRAKLDDNATLLDFTEKLEAACIGVVESGKMTKDLALILHGSKLSREHYLNTEEFIDAVAAELKTKISA.

The transit peptide at 1–21 (QFSPNLSFSAFFPIITFTTAT) directs the protein to the chloroplast. NADP(+)-binding positions include 98–100 (TIT) and Arg105. Thr100 contacts substrate. Substrate is bound by residues 117 to 123 (SPNGTIR), Arg132, and Arg155. Asp275 contacts Mn(2+). Position 283 (Lys283) interacts with NADP(+). Asp298 contributes to the Mn(2+) binding site. NADP(+)-binding positions include 333–338 (GTVTRH) and Asn351.

This sequence belongs to the isocitrate and isopropylmalate dehydrogenases family. Mg(2+) is required as a cofactor. Mn(2+) serves as cofactor. Detected in all tissues examined.

It is found in the plastid. The protein localises to the chloroplast. The enzyme catalyses D-threo-isocitrate + NADP(+) = 2-oxoglutarate + CO2 + NADPH. The chain is Isocitrate dehydrogenase [NADP], chloroplastic from Medicago sativa (Alfalfa).